The following is a 105-amino-acid chain: Large ribosomal subunit protein uL24 (105 aa).

This sequence belongs to the universal ribosomal protein uL24 family. As to quaternary structure, part of the 50S ribosomal subunit.

One of two assembly initiator proteins, it binds directly to the 5'-end of the 23S rRNA, where it nucleates assembly of the 50S subunit. In terms of biological role, one of the proteins that surrounds the polypeptide exit tunnel on the outside of the subunit. This chain is Large ribosomal subunit protein uL24, found in Sphingopyxis alaskensis (strain DSM 13593 / LMG 18877 / RB2256) (Sphingomonas alaskensis).